The chain runs to 70 residues: U2-agatoxin-Ao1r (70 aa).

The first 20 residues, methionine 1–proline 20, serve as a signal peptide directing secretion. Positions valine 21–arginine 34 are excised as a propeptide. Cystine bridges form between cysteine 37–cysteine 53, cysteine 44–cysteine 58, and cysteine 52–cysteine 68. Leucine amide is present on leucine 69.

The protein belongs to the neurotoxin 01 (U2-agtx) family. Expressed by the venom gland.

The protein resides in the secreted. In terms of biological role, insect active toxin causing rapid but reversible paralysis in crickets. No activity shown in mammals. Does not show effect on mammalian voltage-gated calcium channels. The polypeptide is U2-agatoxin-Ao1r (Agelena orientalis (Funnel-web spider)).